The primary structure comprises 582 residues: DNA mismatch repair protein MutL (582 aa).

The protein belongs to the DNA mismatch repair MutL/HexB family.

Its function is as follows. This protein is involved in the repair of mismatches in DNA. It is required for dam-dependent methyl-directed DNA mismatch repair. May act as a 'molecular matchmaker', a protein that promotes the formation of a stable complex between two or more DNA-binding proteins in an ATP-dependent manner without itself being part of a final effector complex. The sequence is that of DNA mismatch repair protein MutL from Chlamydia abortus (strain DSM 27085 / S26/3) (Chlamydophila abortus).